Reading from the N-terminus, the 43-residue chain is Protein PsbN (43 aa).

The chain crosses the membrane as a helical span at residues 7–29 (LSIALAAVCIGVTGYSIYLSFGP).

The protein belongs to the PsbN family.

The protein localises to the cellular thylakoid membrane. May play a role in photosystem I and II biogenesis. In Thermosynechococcus vestitus (strain NIES-2133 / IAM M-273 / BP-1), this protein is Protein PsbN.